The primary structure comprises 546 residues: MAAKDVVFGDSARAKMVEGVNILANAVKVTLGPKGRNVVLERSFGGPTVTKDGVSVAKEIELKDKLQNMGAQMVKEVASKTSDNAGDGTTTATVLAQSIVREGMKYVASGMNPMDLKRGIDKAVAAAVEELKKISKPCTTNKEIAQVGAISANSDSSIGDRIAEAMDKVGKEGVITVEDGKSLADELDVVEGMQFDRGYLSPYFINNPDKQVAVLENPFVLLHDKKVSNIRDLLPVLEQVAKAGRPLLIIAEDVEGEALATLVVNNIRGILKTVAVKAPGFGDRRKAMLEDIAILTGGQVIAEETGLTLEKATLAELGQAKRIEVGKENTTIIDGAGEAVNIEARVKQIRTQIEEATSDYDREKLQERVAKLAGGVAVIKVGAATEVEMKEKKARVEDALHATRAAVEEGIVPGGGVALIRARTAIASLTGVNADQNAGIKIVLRAMEEPLRQIVTNGGEEASVVVAAVAAGKGNYGYNAATGEYVDMVEAGVVDPTKVTRTALQNAASVAGLLLTTDAAVAELPKEDAPMPGGMPGGMGGMGMDM.

ATP-binding positions include 30-33 (TLGP), Lys51, 87-91 (DGTTT), Gly415, 479-481 (NAA), and Asp495. The interval 526 to 546 (KEDAPMPGGMPGGMGGMGMDM) is disordered. The segment covering 534–546 (GMPGGMGGMGMDM) has biased composition (gly residues).

The protein belongs to the chaperonin (HSP60) family. As to quaternary structure, forms a cylinder of 14 subunits composed of two heptameric rings stacked back-to-back. Interacts with the co-chaperonin GroES.

It is found in the cytoplasm. It catalyses the reaction ATP + H2O + a folded polypeptide = ADP + phosphate + an unfolded polypeptide.. Together with its co-chaperonin GroES, plays an essential role in assisting protein folding. The GroEL-GroES system forms a nano-cage that allows encapsulation of the non-native substrate proteins and provides a physical environment optimized to promote and accelerate protein folding. The sequence is that of Chaperonin GroEL 1 from Burkholderia pseudomallei (strain 1106a).